Reading from the N-terminus, the 305-residue chain is MTRHPEYQYLDLMSELLETGDRRMDRTGEGTLSLFGKQMRFKLSDGTIPIFTTKKVYWKTSVKEMLWFLTGQTNISSLLRENVRIWTDWPLAKYRKATGETISQEQFEDRIVASDEFASEWGDLGPVYGKQWRRWVDNDGQEHDQIATVISTLKTNPTSRRILFHAWNVGELDRMALHPCHMTYQFHVSWPNGQDGRPQLSMMVHQRSCDIFLGAPFNICQQAVLLAMIAQQVDMDRGELVWLGGDTHLYLNHLDQARLQLSRKPKPFPKLEIKRRPASIDGYTIDDFEVSEYQSHERIEAPVAV.

Residues arginine 26 and 160–161 (RR) contribute to the dUMP site. Cysteine 180 functions as the Nucleophile in the catalytic mechanism. DUMP contacts are provided by residues 207–210 (RSCD), asparagine 218, and 248–250 (HLY). Residue aspartate 210 coordinates (6R)-5,10-methylene-5,6,7,8-tetrahydrofolate. Alanine 304 serves as a coordination point for (6R)-5,10-methylene-5,6,7,8-tetrahydrofolate.

The protein belongs to the thymidylate synthase family. Bacterial-type ThyA subfamily. Homodimer.

The protein localises to the cytoplasm. The enzyme catalyses dUMP + (6R)-5,10-methylene-5,6,7,8-tetrahydrofolate = 7,8-dihydrofolate + dTMP. Its pathway is pyrimidine metabolism; dTTP biosynthesis. Functionally, catalyzes the reductive methylation of 2'-deoxyuridine-5'-monophosphate (dUMP) to 2'-deoxythymidine-5'-monophosphate (dTMP) while utilizing 5,10-methylenetetrahydrofolate (mTHF) as the methyl donor and reductant in the reaction, yielding dihydrofolate (DHF) as a by-product. This enzymatic reaction provides an intracellular de novo source of dTMP, an essential precursor for DNA biosynthesis. The sequence is that of Thymidylate synthase from Sinorhizobium fredii (strain NBRC 101917 / NGR234).